Reading from the N-terminus, the 57-residue chain is Large ribosomal subunit protein bL32 (57 aa).

The protein belongs to the bacterial ribosomal protein bL32 family.

In Geobacillus kaustophilus (strain HTA426), this protein is Large ribosomal subunit protein bL32.